The following is a 945-amino-acid chain: Leucine--tRNA ligase (945 aa).

Residues 43 to 53 (PYPNGAIHIGH) carry the 'HIGH' region motif. The 'KMSKS' region signature appears at 638–642 (KMSKS). Lysine 641 provides a ligand contact to ATP.

It belongs to the class-I aminoacyl-tRNA synthetase family.

The protein localises to the cytoplasm. The catalysed reaction is tRNA(Leu) + L-leucine + ATP = L-leucyl-tRNA(Leu) + AMP + diphosphate. The chain is Leucine--tRNA ligase from Pyrobaculum neutrophilum (strain DSM 2338 / JCM 9278 / NBRC 100436 / V24Sta) (Thermoproteus neutrophilus).